Consider the following 179-residue polypeptide: ATP-dependent protease subunit HslV (179 aa).

The active site involves threonine 5. Residues glycine 164, cysteine 167, and threonine 170 each contribute to the Na(+) site.

This sequence belongs to the peptidase T1B family. HslV subfamily. In terms of assembly, a double ring-shaped homohexamer of HslV is capped on each side by a ring-shaped HslU homohexamer. The assembly of the HslU/HslV complex is dependent on binding of ATP.

The protein resides in the cytoplasm. It carries out the reaction ATP-dependent cleavage of peptide bonds with broad specificity.. Its activity is regulated as follows. Allosterically activated by HslU binding. Functionally, protease subunit of a proteasome-like degradation complex believed to be a general protein degrading machinery. This is ATP-dependent protease subunit HslV from Verminephrobacter eiseniae (strain EF01-2).